A 1465-amino-acid polypeptide reads, in one-letter code: DNA polymerase III PolC-type (1465 aa).

An Exonuclease domain is found at 427–583 (YVVFDVETTG…YDAEATGRLL (157 aa)).

The protein belongs to the DNA polymerase type-C family. PolC subfamily.

The protein localises to the cytoplasm. It catalyses the reaction DNA(n) + a 2'-deoxyribonucleoside 5'-triphosphate = DNA(n+1) + diphosphate. In terms of biological role, required for replicative DNA synthesis. This DNA polymerase also exhibits 3' to 5' exonuclease activity. The protein is DNA polymerase III PolC-type of Streptococcus pyogenes serotype M5 (strain Manfredo).